We begin with the raw amino-acid sequence, 260 residues long: Glutamate racemase (260 aa).

Substrate contacts are provided by residues 7-8 and 39-40; these read DS and YG. Cys-71 functions as the Proton donor/acceptor in the catalytic mechanism. 72–73 contacts substrate; that stretch reads NT. Cys-182 (proton donor/acceptor) is an active-site residue. 183–184 provides a ligand contact to substrate; sequence TH.

It belongs to the aspartate/glutamate racemases family.

It carries out the reaction L-glutamate = D-glutamate. The protein operates within cell wall biogenesis; peptidoglycan biosynthesis. Its function is as follows. Provides the (R)-glutamate required for cell wall biosynthesis. The sequence is that of Glutamate racemase from Sulfurihydrogenibium sp. (strain YO3AOP1).